Reading from the N-terminus, the 100-residue chain is Urease subunit gamma (100 aa).

The protein belongs to the urease gamma subunit family. In terms of assembly, heterotrimer of UreA (gamma), UreB (beta) and UreC (alpha) subunits. Three heterotrimers associate to form the active enzyme.

It is found in the cytoplasm. The catalysed reaction is urea + 2 H2O + H(+) = hydrogencarbonate + 2 NH4(+). The protein operates within nitrogen metabolism; urea degradation; CO(2) and NH(3) from urea (urease route): step 1/1. The sequence is that of Urease subunit gamma from Staphylococcus xylosus.